Reading from the N-terminus, the 215-residue chain is Ribonuclease HII (215 aa).

The RNase H type-2 domain occupies 24–215; that stretch reads GVVFGVDEVG…PIRQFYENVD (192 aa). Residues Asp-30, Glu-31, and Asp-125 each contribute to the a divalent metal cation site.

Belongs to the RNase HII family. Requires Mn(2+) as cofactor. Mg(2+) serves as cofactor.

The protein localises to the cytoplasm. The catalysed reaction is Endonucleolytic cleavage to 5'-phosphomonoester.. Functionally, endonuclease that specifically degrades the RNA of RNA-DNA hybrids. In Zymomonas mobilis subsp. mobilis (strain ATCC 31821 / ZM4 / CP4), this protein is Ribonuclease HII.